A 46-amino-acid polypeptide reads, in one-letter code: Protein PsbN (46 aa).

A helical transmembrane segment spans residues 10–30 (VAIAVLAALLGLTGFGVYTAF).

The protein belongs to the PsbN family.

Its subcellular location is the cellular thylakoid membrane. Its function is as follows. May play a role in photosystem I and II biogenesis. The sequence is that of Protein PsbN from Synechococcus sp. (strain CC9311).